An 82-amino-acid polypeptide reads, in one-letter code: Small ribosomal subunit protein eS27 (82 aa).

A C4-type zinc finger spans residues 37–59; that stretch reads CPGCFTITTVFSHAQTVVICQGC.

It belongs to the eukaryotic ribosomal protein eS27 family. Component of the small ribosomal subunit (SSU). Mature N.crassa ribosomes consist of a small (40S) and a large (60S) subunit. The 40S small subunit contains 1 molecule of ribosomal RNA (18S rRNA) and at least 32 different proteins. The large 60S subunit contains 3 rRNA molecules (26S, 5.8S and 5S rRNA) and at least 42 different proteins. Zn(2+) serves as cofactor.

The protein resides in the cytoplasm. In terms of biological role, component of the ribosome, a large ribonucleoprotein complex responsible for the synthesis of proteins in the cell. The small ribosomal subunit (SSU) binds messenger RNAs (mRNAs) and translates the encoded message by selecting cognate aminoacyl-transfer RNA (tRNA) molecules. The large subunit (LSU) contains the ribosomal catalytic site termed the peptidyl transferase center (PTC), which catalyzes the formation of peptide bonds, thereby polymerizing the amino acids delivered by tRNAs into a polypeptide chain. The nascent polypeptides leave the ribosome through a tunnel in the LSU and interact with protein factors that function in enzymatic processing, targeting, and the membrane insertion of nascent chains at the exit of the ribosomal tunnel. This chain is Small ribosomal subunit protein eS27 (crp-6), found in Neurospora crassa (strain ATCC 24698 / 74-OR23-1A / CBS 708.71 / DSM 1257 / FGSC 987).